Consider the following 739-residue polypeptide: Catalase-peroxidase (739 aa).

The tryptophyl-tyrosyl-methioninium (Trp-Tyr) (with M-253) cross-link spans 99–227 (WHSAGTYRMG…LAAVQMGLIY (129 aa)). His-100 functions as the Proton acceptor in the catalytic mechanism. A cross-link (tryptophyl-tyrosyl-methioninium (Tyr-Met) (with W-99)) is located at residues 227-253 (YVNPEGPDGNPDPVASGRDVRETFARM). Position 268 (His-268) interacts with heme b.

This sequence belongs to the peroxidase family. Peroxidase/catalase subfamily. Homodimer or homotetramer. The cofactor is heme b. Post-translationally, formation of the three residue Trp-Tyr-Met cross-link is important for the catalase, but not the peroxidase activity of the enzyme.

The catalysed reaction is H2O2 + AH2 = A + 2 H2O. It catalyses the reaction 2 H2O2 = O2 + 2 H2O. In terms of biological role, bifunctional enzyme with both catalase and broad-spectrum peroxidase activity. In Syntrophotalea carbinolica (strain DSM 2380 / NBRC 103641 / GraBd1) (Pelobacter carbinolicus), this protein is Catalase-peroxidase.